Reading from the N-terminus, the 332-residue chain is tRNA dimethylallyltransferase 2 (332 aa).

Residue G15–T22 participates in ATP binding. T17–T22 contributes to the substrate binding site. Interaction with substrate tRNA regions lie at residues D40 to M43 and Q164 to R168.

The protein belongs to the IPP transferase family. As to quaternary structure, monomer. Mg(2+) is required as a cofactor.

The catalysed reaction is adenosine(37) in tRNA + dimethylallyl diphosphate = N(6)-dimethylallyladenosine(37) in tRNA + diphosphate. In terms of biological role, catalyzes the transfer of a dimethylallyl group onto the adenine at position 37 in tRNAs that read codons beginning with uridine, leading to the formation of N6-(dimethylallyl)adenosine (i(6)A). This Hahella chejuensis (strain KCTC 2396) protein is tRNA dimethylallyltransferase 2.